A 49-amino-acid chain; its full sequence is Light-harvesting protein B-875 beta chain (49 aa).

Topologically, residues 2 to 27 (ADKSDLGYTGLTDEQAQELHSVYMSG) are cytoplasmic. A bacteriochlorophyll is bound by residues His-21 and His-39. Residues 28–45 (LWPFSAVAIVAHLAVYIW) traverse the membrane as a helical; Signal-anchor for type II membrane protein segment. At 46-49 (RPWF) the chain is on the periplasmic side.

It belongs to the antenna complex beta subunit family. The core complex is formed by different alpha and beta chains, binding bacteriochlorophyll molecules, and arranged most probably in tetrameric structures disposed around the reaction center. The non-pigmented gamma chains may constitute additional components.

It is found in the cell inner membrane. Its function is as follows. Antenna complexes are light-harvesting systems, which transfer the excitation energy to the reaction centers. In Cereibacter sphaeroides (Rhodobacter sphaeroides), this protein is Light-harvesting protein B-875 beta chain (pufB).